The primary structure comprises 338 residues: Elongation factor Ts, mitochondrial (338 aa).

A mitochondrion-targeting transit peptide spans 1–42 (MSPSIAMFTLTPNARALASKTSKMDLIKNLRERTGAPIVDVK).

The protein belongs to the EF-Ts family.

It is found in the mitochondrion. Its function is as follows. Associates with the EF-Tu.GDP complex and induces the exchange of GDP to GTP. It remains bound to the aminoacyl-tRNA.EF-Tu.GTP complex up to the GTP hydrolysis stage on the ribosome. The polypeptide is Elongation factor Ts, mitochondrial (Ostreococcus tauri).